Reading from the N-terminus, the 639-residue chain is UvrABC system protein C (639 aa).

Residues glutamate 20–isoleucine 97 enclose the GIY-YIG domain. The 36-residue stretch at lysine 207–valine 242 folds into the UVR domain.

This sequence belongs to the UvrC family. As to quaternary structure, interacts with UvrB in an incision complex.

The protein resides in the cytoplasm. Functionally, the UvrABC repair system catalyzes the recognition and processing of DNA lesions. UvrC both incises the 5' and 3' sides of the lesion. The N-terminal half is responsible for the 3' incision and the C-terminal half is responsible for the 5' incision. The protein is UvrABC system protein C of Rickettsia peacockii (strain Rustic).